A 352-amino-acid chain; its full sequence is Chorismate synthase (352 aa).

Arginine 48 is a binding site for NADP(+). Residues 125–127, 237–238, glycine 278, 293–297, and arginine 319 each bind FMN; these read RSS, NA, and KPTSS.

This sequence belongs to the chorismate synthase family. As to quaternary structure, homotetramer. FMNH2 serves as cofactor.

It catalyses the reaction 5-O-(1-carboxyvinyl)-3-phosphoshikimate = chorismate + phosphate. It functions in the pathway metabolic intermediate biosynthesis; chorismate biosynthesis; chorismate from D-erythrose 4-phosphate and phosphoenolpyruvate: step 7/7. Functionally, catalyzes the anti-1,4-elimination of the C-3 phosphate and the C-6 proR hydrogen from 5-enolpyruvylshikimate-3-phosphate (EPSP) to yield chorismate, which is the branch point compound that serves as the starting substrate for the three terminal pathways of aromatic amino acid biosynthesis. This reaction introduces a second double bond into the aromatic ring system. The protein is Chorismate synthase of Francisella tularensis subsp. tularensis (strain FSC 198).